A 580-amino-acid chain; its full sequence is G1/S-specific cyclin CLN3 (580 aa).

Over residues 454–469 (FTPTSSSSSPSPFNSP) the composition is skewed to low complexity. Disordered stretches follow at residues 454-498 (FTPT…QNSF) and 546-580 (MATA…KKTR). Composition is skewed to polar residues over residues 470-480 (YKTSSSMTTPD) and 563-580 (TSSV…KKTR).

It belongs to the cyclin family.

Functionally, essential for the control of the cell cycle at the G1/S (start) transition. CLN3 may be an upstream activator of the G1 cyclins which directly catalyze start. In Saccharomyces cerevisiae (strain ATCC 204508 / S288c) (Baker's yeast), this protein is G1/S-specific cyclin CLN3 (CLN3).